A 72-amino-acid polypeptide reads, in one-letter code: Alpha-conotoxin SII (72 aa).

A signal peptide spans M1–S21. The propeptide occupies F22–R50. The segment at P23–G51 is disordered. A compositionally biased stretch (basic and acidic residues) spans R26–G49. 3 disulfide bridges follow: C52–C68, C53–C58, and C54–C64. A propeptide spanning residues R70–L72 is cleaved from the precursor.

Belongs to the conotoxin A superfamily. The disulfide bond Cys-52-Cys-68 (Cys I-VI), which corresponds to an extra disulfide bond when compared to the cysteine framework I (CC-C-C), does contribute to conotoxin SII stability and imparts a unique binding mode at the nAChR. In terms of tissue distribution, expressed by the venom duct.

It is found in the secreted. Its function is as follows. Alpha-conotoxins act on postsynaptic membranes, they bind to the nicotinic acetylcholine receptors (nAChR) and thus inhibit them. This toxin potently inhibits the rodent muscle nAChR (IC(50)=120 nM (adult subtype, alpha-1-beta-1-delta-epsilon/CHRNA1-CHRNB1-CHRND-CHRNE) and IC(50)=370 nM (fetal subtype, alpha-1-beta-1-gamma-delta/CHRNA1-CHRNB1-CHRNG-CHRND)) and weakly inhibits neuronal nAChRs. In contrast to alpha-conotoxins bearing 2 disulfide bonds (framework I), this conotoxin acts via a unique binding mode with the helix and the N- and C-termini buried in the binding pocket of muscle nAChRs. The polypeptide is Alpha-conotoxin SII (Conus striatus (Striated cone)).